We begin with the raw amino-acid sequence, 313 residues long: MEMMNWERRSLLNELIHGLKAAKQLQGSSSPSLSASSSYLTTEIKENLLHNIVSSFKKAILMLNGSTTQHNPTIELAPDPLAHPGKVPGSPASITGNPRSEEFFNVRSKEFNLSSKKRKMLPKWTEQVRISPERGLEGPHDDIFSWRKYGQKDILGAKFPRSYYRCTFRNTQYCWATKQVQRSDGDPTIFEVTYRGTHTCSQGIPLPEKRETKPKHTVAVNYQNLRASLTVRTGGLGSEAFSFPVTSPLYTYESINGGGTFYHHVGSSGPSDFTGLISTNTSTGSSPIFDVNFQFDPTAEINTGFPTFFHNSI.

Positions 135–203 form a DNA-binding region, WRKY; sequence GLEGPHDDIF…YRGTHTCSQG (69 aa).

This sequence belongs to the WRKY group III family.

It is found in the nucleus. Transcription factor. Interacts specifically with the W box (5'-(T)TGAC[CT]-3'), a frequently occurring elicitor-responsive cis-acting element. The chain is Probable WRKY transcription factor 41 (WRKY41) from Arabidopsis thaliana (Mouse-ear cress).